Consider the following 1462-residue polypeptide: FYVE, RhoGEF and PH domain-containing protein 5 (1462 aa).

Disordered regions lie at residues Gly-37–Glu-323, Tyr-492–Ile-512, Ser-592–Val-613, His-670–Ser-718, Glu-746–Ile-777, and Cys-851–Val-887. A compositionally biased stretch (basic and acidic residues) spans Pro-72–Gly-82. 2 stretches are compositionally biased toward acidic residues: residues Ser-95–Gly-106 and Glu-137–Ala-151. Positions Ser-161–Ser-177 are enriched in basic and acidic residues. Acidic residues-rich tracts occupy residues Gly-211 to Gly-220 and Met-242 to Glu-255. The span at Ser-592 to Ser-611 shows a compositional bias: polar residues. Residues Ser-676 to Ser-685 are compositionally biased toward low complexity. Positions Pro-858–Val-887 are enriched in basic and acidic residues. A DH domain is found at Arg-892–Ser-1084. One can recognise a PH 1 domain in the interval Glu-1113–Pro-1207. The FYVE-type zinc-finger motif lies at Val-1242 to Lys-1301. Positions 1248, 1251, 1264, 1267, 1272, 1275, 1293, and 1296 each coordinate Zn(2+). Residues Gly-1363–Val-1461 enclose the PH 2 domain.

As to expression, expressed in endothelial cells (at protein level).

It localises to the cytoplasm. The protein resides in the cytoskeleton. Its subcellular location is the cell projection. The protein localises to the ruffle membrane. It is found in the endoplasmic reticulum. It localises to the golgi apparatus. The protein resides in the early endosome. Functionally, activates CDC42, a member of the Ras-like family of Rho- and Rac proteins, by exchanging bound GDP for free GTP. Mediates VEGF-induced CDC42 activation. May regulate proangiogenic action of VEGF in vascular endothelial cells, including network formation, directional movement and proliferation. May play a role in regulating the actin cytoskeleton and cell shape. This is FYVE, RhoGEF and PH domain-containing protein 5 (FGD5) from Homo sapiens (Human).